We begin with the raw amino-acid sequence, 210 residues long: Protein RFS1 (210 aa).

The Flavodoxin-like domain occupies 4–203 (VAILIYSVDD…RVHQLQGKAF (200 aa)).

The protein belongs to the WrbA family.

The protein localises to the cytoplasm. The protein resides in the membrane raft. The polypeptide is Protein RFS1 (RFS1) (Saccharomyces cerevisiae (strain ATCC 204508 / S288c) (Baker's yeast)).